We begin with the raw amino-acid sequence, 154 residues long: Myoglobin (154 aa).

Residues 2–148 form the Globin domain; that stretch reads GLSDGEWQLV…FRKDIAAKYK (147 aa). Residue S4 is modified to Phosphoserine. H65 provides a ligand contact to nitrite. H65 lines the O2 pocket. T68 carries the post-translational modification Phosphothreonine. H94 provides a ligand contact to heme b.

This sequence belongs to the globin family. In terms of assembly, monomeric.

It is found in the cytoplasm. The protein resides in the sarcoplasm. It catalyses the reaction Fe(III)-heme b-[protein] + nitric oxide + H2O = Fe(II)-heme b-[protein] + nitrite + 2 H(+). It carries out the reaction H2O2 + AH2 = A + 2 H2O. Monomeric heme protein which primary function is to store oxygen and facilitate its diffusion within muscle tissues. Reversibly binds oxygen through a pentacoordinated heme iron and enables its timely and efficient release as needed during periods of heightened demand. Depending on the oxidative conditions of tissues and cells, and in addition to its ability to bind oxygen, it also has a nitrite reductase activity whereby it regulates the production of bioactive nitric oxide. Under stress conditions, like hypoxia and anoxia, it also protects cells against reactive oxygen species thanks to its pseudoperoxidase activity. In Castor fiber (Eurasian beaver), this protein is Myoglobin (MB).